A 340-amino-acid polypeptide reads, in one-letter code: Melanin-concentrating hormone receptor 2 (340 aa).

Topologically, residues 1 to 39 are extracellular; sequence MNPFHASCWNTSAELLNKSWNKEFAYQTASVVDTVILPS. N-linked (GlcNAc...) asparagine glycosylation is found at asparagine 10 and asparagine 17. Residues 40–60 traverse the membrane as a helical segment; that stretch reads MIGIICSTGLVGNILIVFTII. Residues 61 to 69 are Cytoplasmic-facing; the sequence is RSRKKTVPD. A helical membrane pass occupies residues 70-90; it reads IYICNLAVADLVHIVGMPFLI. The Extracellular segment spans residues 91 to 104; that stretch reads HQWARGGEWVFGGP. The helical transmembrane segment at 105 to 129 threads the bilayer; that stretch reads LCTIITSLDTCNQFACSAIMTVMSV. Topologically, residues 130–154 are cytoplasmic; sequence DRYFALVQPFRLTRWRTRYKTIRIN. The helical transmembrane segment at 155–175 threads the bilayer; that stretch reads LGLWAASFILALPVWVYSKVI. Residues 176–200 are Extracellular-facing; that stretch reads KFKDGVESCAFDLTSPDDVLWYTLY. Residues 201 to 221 form a helical membrane-spanning segment; sequence LTITTFFFPLPLILVCYILIL. The Cytoplasmic portion of the chain corresponds to 222-252; it reads CYTWEMYQQNKDARCCNPSVPKQRVMKLTKM. Residues 253-273 form a helical membrane-spanning segment; sequence VLVLVVVFILSAAPYHVIQLV. Residues 274–288 lie on the Extracellular side of the membrane; that stretch reads NLQMEQPTLAFYVGY. Residues 289–309 form a helical membrane-spanning segment; the sequence is YLSICLSYASSSINPFLYILL. Over 310–340 the chain is Cytoplasmic; that stretch reads SGNFQKRLPQIQRRATEKEINNMGNTLKSHF.

Belongs to the G-protein coupled receptor 1 family. Specifically expressed in the brain, with highest levels in cerebral cortex, hippocampus and amygdala. No expression detected in the cerebellum, thalamus or hypothalamus.

The protein resides in the cell membrane. Functionally, receptor for melanin-concentrating hormone, coupled to G proteins that activate phosphoinositide hydrolysis. The polypeptide is Melanin-concentrating hormone receptor 2 (MCHR2) (Homo sapiens (Human)).